We begin with the raw amino-acid sequence, 253 residues long: 3-deoxy-manno-octulosonate cytidylyltransferase (253 aa).

The protein belongs to the KdsB family.

Its subcellular location is the cytoplasm. It carries out the reaction 3-deoxy-alpha-D-manno-oct-2-ulosonate + CTP = CMP-3-deoxy-beta-D-manno-octulosonate + diphosphate. Its pathway is nucleotide-sugar biosynthesis; CMP-3-deoxy-D-manno-octulosonate biosynthesis; CMP-3-deoxy-D-manno-octulosonate from 3-deoxy-D-manno-octulosonate and CTP: step 1/1. The protein operates within bacterial outer membrane biogenesis; lipopolysaccharide biosynthesis. In terms of biological role, activates KDO (a required 8-carbon sugar) for incorporation into bacterial lipopolysaccharide in Gram-negative bacteria. The chain is 3-deoxy-manno-octulosonate cytidylyltransferase from Geotalea daltonii (strain DSM 22248 / JCM 15807 / FRC-32) (Geobacter daltonii).